Here is a 307-residue protein sequence, read N- to C-terminus: Protein pxr1 (307 aa).

A compositionally biased stretch (basic residues) spans 1-11 (MGLAAPRKKTK). Disordered stretches follow at residues 1-25 (MGLA…SRST) and 144-234 (NATA…SDCD). Positions 15 to 25 (DPNNTSWSRST) are enriched in polar residues. The 55-residue stretch at 25–79 (TDGFGHRILKAQGWTPGGFLGARNATHSDLFTTASASHIRVVLKDDTLGLGARPK) folds into the G-patch domain. Composition is skewed to basic and acidic residues over residues 154–168 (LRVD…HESE) and 206–221 (GKEL…EKKQ).

Belongs to the PINX1 family.

Its subcellular location is the nucleus. It localises to the nucleolus. Its function is as follows. Involved in rRNA-processing at A0, A1 and A2 sites and negatively regulates telomerase. This is Protein pxr1 (pxr1) from Neosartorya fischeri (strain ATCC 1020 / DSM 3700 / CBS 544.65 / FGSC A1164 / JCM 1740 / NRRL 181 / WB 181) (Aspergillus fischerianus).